The sequence spans 260 residues: Acyl-[acyl-carrier-protein]--UDP-N-acetylglucosamine O-acyltransferase (260 aa).

Belongs to the transferase hexapeptide repeat family. LpxA subfamily. As to quaternary structure, homotrimer.

The protein localises to the cytoplasm. The enzyme catalyses a (3R)-hydroxyacyl-[ACP] + UDP-N-acetyl-alpha-D-glucosamine = a UDP-3-O-[(3R)-3-hydroxyacyl]-N-acetyl-alpha-D-glucosamine + holo-[ACP]. The protein operates within glycolipid biosynthesis; lipid IV(A) biosynthesis; lipid IV(A) from (3R)-3-hydroxytetradecanoyl-[acyl-carrier-protein] and UDP-N-acetyl-alpha-D-glucosamine: step 1/6. Involved in the biosynthesis of lipid A, a phosphorylated glycolipid that anchors the lipopolysaccharide to the outer membrane of the cell. This Sulfurovum sp. (strain NBC37-1) protein is Acyl-[acyl-carrier-protein]--UDP-N-acetylglucosamine O-acyltransferase.